The primary structure comprises 164 residues: S-ribosylhomocysteine lyase (164 aa).

Residues His-54, His-58, and Cys-128 each contribute to the Fe cation site.

Belongs to the LuxS family. Homodimer. Requires Fe cation as cofactor.

It carries out the reaction S-(5-deoxy-D-ribos-5-yl)-L-homocysteine = (S)-4,5-dihydroxypentane-2,3-dione + L-homocysteine. Functionally, involved in the synthesis of autoinducer 2 (AI-2) which is secreted by bacteria and is used to communicate both the cell density and the metabolic potential of the environment. The regulation of gene expression in response to changes in cell density is called quorum sensing. Catalyzes the transformation of S-ribosylhomocysteine (RHC) to homocysteine (HC) and 4,5-dihydroxy-2,3-pentadione (DPD). The chain is S-ribosylhomocysteine lyase from Campylobacter jejuni subsp. jejuni serotype O:6 (strain 81116 / NCTC 11828).